A 272-amino-acid polypeptide reads, in one-letter code: Shikimate dehydrogenase (NADP(+)) (272 aa).

Shikimate contacts are provided by residues 14-16 and threonine 61; that span reads SKS. Lysine 65 acts as the Proton acceptor in catalysis. Residue glutamate 77 participates in NADP(+) binding. Positions 86 and 102 each coordinate shikimate. NADP(+) contacts are provided by residues 126–130, 149–154, and methionine 213; these read GAGGA and NRTASR. Residue tyrosine 215 coordinates shikimate. Position 237 (glycine 237) interacts with NADP(+).

The protein belongs to the shikimate dehydrogenase family. Homodimer.

The catalysed reaction is shikimate + NADP(+) = 3-dehydroshikimate + NADPH + H(+). Its pathway is metabolic intermediate biosynthesis; chorismate biosynthesis; chorismate from D-erythrose 4-phosphate and phosphoenolpyruvate: step 4/7. In terms of biological role, involved in the biosynthesis of the chorismate, which leads to the biosynthesis of aromatic amino acids. Catalyzes the reversible NADPH linked reduction of 3-dehydroshikimate (DHSA) to yield shikimate (SA). The sequence is that of Shikimate dehydrogenase (NADP(+)) from Salmonella typhimurium (strain LT2 / SGSC1412 / ATCC 700720).